The following is a 231-amino-acid chain: Uracil-DNA glycosylase (231 aa).

The Proton acceptor role is filled by Asp-74.

This sequence belongs to the uracil-DNA glycosylase (UDG) superfamily. UNG family.

The protein resides in the cytoplasm. It carries out the reaction Hydrolyzes single-stranded DNA or mismatched double-stranded DNA and polynucleotides, releasing free uracil.. Functionally, excises uracil residues from the DNA which can arise as a result of misincorporation of dUMP residues by DNA polymerase or due to deamination of cytosine. The chain is Uracil-DNA glycosylase from Campylobacter jejuni subsp. jejuni serotype O:6 (strain 81116 / NCTC 11828).